We begin with the raw amino-acid sequence, 188 residues long: UPF0301 protein CPn_0139/CP_0633/CPj0139/CpB0140 (188 aa).

This sequence belongs to the UPF0301 (AlgH) family.

This chain is UPF0301 protein CPn_0139/CP_0633/CPj0139/CpB0140, found in Chlamydia pneumoniae (Chlamydophila pneumoniae).